The following is a 556-amino-acid chain: Undecaprenyl phosphate-alpha-4-amino-4-deoxy-L-arabinose arabinosyl transferase (556 aa).

The next 10 membrane-spanning stretches (helical) occupy residues 88–108, 116–136, 179–199, 207–227, 258–278, 296–316, 319–339, 355–375, 384–404, and 410–430; these read FASV…AMML, LLAA…TYSV, FMTK…PVAL, LLLF…PWAL, APFW…LALL, FFLL…KGKL, YILP…SGLA, IVFG…IIVP, LTII…AVSL, and WGYL…GSIP.

The protein belongs to the glycosyltransferase 83 family.

Its subcellular location is the cell inner membrane. The catalysed reaction is 4-amino-4-deoxy-alpha-L-arabinopyranosyl di-trans,octa-cis-undecaprenyl phosphate + lipid IVA = lipid IIA + di-trans,octa-cis-undecaprenyl phosphate.. The protein operates within lipopolysaccharide metabolism; 4-amino-4-deoxy-beta-L-arabinose-lipid A biosynthesis. Catalyzes the transfer of the L-Ara4N moiety of the glycolipid undecaprenyl phosphate-alpha-L-Ara4N to lipid A. The modified arabinose is attached to lipid A and is required for resistance to polymyxin and cationic antimicrobial peptides. This Pectobacterium atrosepticum (strain SCRI 1043 / ATCC BAA-672) (Erwinia carotovora subsp. atroseptica) protein is Undecaprenyl phosphate-alpha-4-amino-4-deoxy-L-arabinose arabinosyl transferase.